Consider the following 231-residue polypeptide: Maleylacetoacetate isomerase maiA (231 aa).

Residues 7–93 (PKVTLYTYFR…YLEEITPASS (87 aa)) enclose the GST N-terminal domain. The GST C-terminal domain occupies 102–224 (NPEARAVVRT…HWRTQPDTPE (123 aa)).

This sequence belongs to the GST superfamily. Zeta family.

It catalyses the reaction 4-maleylacetoacetate = 4-fumarylacetoacetate. It participates in amino-acid degradation; L-phenylalanine degradation; acetoacetate and fumarate from L-phenylalanine: step 5/6. Its function is as follows. Maleylacetoacetate isomerase; part of the L-tyrosine degradation gene cluster that mediates the biosynthesis of the brownish pigment pyomelanin as an alternative melanin. The 4-hydroxyphenylpyruvate dioxygenase hppD catalyzes the conversion of 4-hydroxyphenylpyruvate to homogentisic acid (HGA). The protein hmgX is crucial for this conversion and thus, probably functions as an accessory factor to mediate specific activity of hppD. The homogentisate 1,2-dioxygenase hmgA is then involved in the cleavage of the aromatic ring of HGA and its conversion to 4-maleylacetoacetate. When hmgA activity is lowered by the cell wall integrity (CWI) signaling pathway, HGA accumulates and leads to the production of pyomelanin through benzoquinone acetic acid after oxidation and polymerization. On the opposite, in non-stress conditions, both hppD and hmgA activities are balanced and HGA is degraded into 4-maleylacetoacetate. 4-maleylacetoacetate is further converted to 4-fumarylacetoacetate by the maleylacetoacetate isomerase maiA, which is degraded into fumarate and acetoacetate by the fumarylacetoacetase fahA. The protein is Maleylacetoacetate isomerase maiA of Aspergillus fumigatus (strain ATCC MYA-4609 / CBS 101355 / FGSC A1100 / Af293) (Neosartorya fumigata).